The following is a 296-amino-acid chain: Myeloid differentiation primary response protein MyD88 (296 aa).

The Death domain maps to Arg-32 to Ile-109. Residues Glu-110–Gly-155 form an intermediate domain region. The region spanning Glu-159–Leu-293 is the TIR domain. A Phosphoserine modification is found at Ser-244.

In terms of assembly, homodimer. Also forms heterodimers with TIRAP. Binds to TLR2, TLR4, IRAK1, IRAK2 and IRAK4 via their respective TIR domains. Interacts with IL18R1. Interacts with BMX, IL1RL1, IKBKE and IRF7. Interacts with LRRFIP1 and LRRFIP2; this interaction positively regulates Toll-like receptor (TLR) signaling in response to agonist. Interacts with FLII. LRRFIP1 and LRRFIP2 compete with FLII for MYD88-binding. Interacts with IRF1. Upon IL1B treatment, forms a complex with PELI1, IRAK1, IRAK4 and TRAF6; this complex recruits MAP3K7/TAK1, TAB1 and TAB2 to mediate NF-kappa-B activation. Direct binding of SMAD6 to PELI1 prevents the complex formation and hence negatively regulates IL1R-TLR signaling and eventually NF-kappa-B-mediated gene expression. May interact with PIK3AP1. Interacts (via TIR domain) with DHX9 (via H2A and OB-fold regions); this interaction is direct. Interacts with OTUD4 deubiquitinase; the interaction is direct. In terms of processing, ubiquitinated; undergoes 'Lys-63'-linked polyubiquitination. OTUD4 specifically hydrolyzes 'Lys-63'-linked polyubiquitinated MYD88. Deubiquitinated by USP3 that cleaves 'Lys-63'-linked ubiquitin chains leading to inhibition of MYD88-induced NF-kappa-B signaling.

The protein resides in the cytoplasm. It is found in the nucleus. Its function is as follows. Adapter protein involved in the Toll-like receptor and IL-1 receptor signaling pathway in the innate immune response. Acts via IRAK1, IRAK2, IRF7 and TRAF6, leading to NF-kappa-B activation, cytokine secretion and the inflammatory response. Increases IL-8 transcription. Involved in IL-18-mediated signaling pathway. Activates IRF1 resulting in its rapid migration into the nucleus to mediate an efficient induction of IFN-beta, NOS2/INOS, and IL12A genes. Upon TLR8 activation by GU-rich single-stranded RNA (GU-rich RNA) derived from viruses, induces IL1B release through NLRP3 inflammasome activation. MyD88-mediated signaling in intestinal epithelial cells is crucial for maintenance of gut homeostasis and controls the expression of the antimicrobial lectin REG3G in the small intestine. In Pan troglodytes (Chimpanzee), this protein is Myeloid differentiation primary response protein MyD88 (MYD88).